We begin with the raw amino-acid sequence, 248 residues long: 14-3-3 protein zeta (248 aa).

This sequence belongs to the 14-3-3 family. Homodimer; homodimerization is not essential for modulating the activity of Slo. Interacts with phosphorylated Slob; the interaction with Slob mediates an indirect interaction with Slo. Interacts with phosphorylated yki. Interacts with hemo; this represses 14-3-3zeta activity which prevents the 14-3-3zeta-mediated activation of phosphoinositide 3-kinase Pi3K68D. This, in turn, inhibits the Pi3K68D-mediated conversion of phosphatidylinositol to phosphatidylinositol-3-phosphate and prevents progression of early endosomes through the maturation process which regulates subsequent steps of phagocytic processing. Interacts with REPTOR (when phosphorylated), this interaction may assist the cytoplasmic retention of REPTOR. Predominantly expressed in the ventral nerve cord of the embryo, and in the neural tissues of the head. Also found in the region posterior to the morphogenetic furrow of the eye imaginal disk where cells differentiate as photoreceptors.

It localises to the cytoplasm. The protein resides in the early endosome. Its function is as follows. Required in Raf-dependent cell proliferation and photoreceptor differentiation during eye development. Acts upstream of Raf and downstream of Ras, and is essential for viability. Acts as a negative regulator of the slo calcium channel via its interaction with slo-binding protein slob. Inhibits yki activity by restricting its nuclear localization. Binds to and promotes the activity of phosphoinositide 3-kinase Pi3K68D which converts phosphatidylinositol to phosphatidylinositol-3-phosphate and promotes maturation of early endosomes. This Drosophila melanogaster (Fruit fly) protein is 14-3-3 protein zeta (14-3-3zeta).